Reading from the N-terminus, the 369-residue chain is Arsenite methyltransferase (369 aa).

Serine 46 is modified (phosphoserine).

This sequence belongs to the methyltransferase superfamily. Arsenite methyltransferase family.

It is found in the cytoplasm. It localises to the cytosol. The catalysed reaction is arsenic triglutathione + [thioredoxin]-dithiol + S-adenosyl-L-methionine + 2 H2O = methylarsonous acid + [thioredoxin]-disulfide + 3 glutathione + S-adenosyl-L-homocysteine + H(+). The enzyme catalyses arsenic triglutathione + 2 [thioredoxin]-dithiol + 2 S-adenosyl-L-methionine + H2O = dimethylarsinous acid + 2 [thioredoxin]-disulfide + 3 glutathione + 2 S-adenosyl-L-homocysteine + 2 H(+). It carries out the reaction arsenic triglutathione + 3 [thioredoxin]-dithiol + 3 S-adenosyl-L-methionine = trimethylarsine + 3 [thioredoxin]-disulfide + 3 glutathione + 3 S-adenosyl-L-homocysteine + 3 H(+). Its function is as follows. Catalyzes the transfer of a methyl group from AdoMet to trivalent arsenicals producing methylated and dimethylated arsenicals. It methylates arsenite to form methylarsonate, Me-AsO(3)H(2), which is reduced by methylarsonate reductase to methylarsonite, Me-As(OH)2. Methylarsonite is also a substrate and it is converted into the much less toxic compound dimethylarsinate (cacodylate), Me(2)As(O)-OH. The protein is Arsenite methyltransferase (As3mt) of Rattus norvegicus (Rat).